The sequence spans 100 residues: Urease subunit gamma (100 aa).

It belongs to the urease gamma subunit family. In terms of assembly, heterotrimer of UreA (gamma), UreB (beta) and UreC (alpha) subunits. Three heterotrimers associate to form the active enzyme.

The protein resides in the cytoplasm. It carries out the reaction urea + 2 H2O + H(+) = hydrogencarbonate + 2 NH4(+). Its pathway is nitrogen metabolism; urea degradation; CO(2) and NH(3) from urea (urease route): step 1/1. The protein is Urease subunit gamma of Rhodococcus opacus (strain B4).